The primary structure comprises 221 residues: PKHD-type hydroxylase PMN2A_0775 (221 aa).

A Fe2OG dioxygenase domain is found at 80-174 (LIHGVMFTQS…RHVCVGWIQS (95 aa)). H98, D100, and H155 together coordinate Fe cation. R165 is a binding site for 2-oxoglutarate.

Fe(2+) is required as a cofactor. It depends on L-ascorbate as a cofactor.

This Prochlorococcus marinus (strain NATL2A) protein is PKHD-type hydroxylase PMN2A_0775.